The sequence spans 301 residues: Protoheme IX farnesyltransferase 2 (301 aa).

The next 9 helical transmembrane spans lie at 29 to 49, 51 to 71, 101 to 121, 123 to 143, 150 to 170, 177 to 197, 223 to 243, 244 to 264, and 281 to 301; these read VVAL…PTAV, VQPL…AAAL, ALIF…VLVN, LTAW…TAYL, NIVI…TAVT, ALLL…ALAI, CILL…LVGM, CGPM…YKAW, and FSIY…YLWS.

This sequence belongs to the UbiA prenyltransferase family. Protoheme IX farnesyltransferase subfamily.

It localises to the cell inner membrane. It carries out the reaction heme b + (2E,6E)-farnesyl diphosphate + H2O = Fe(II)-heme o + diphosphate. It participates in porphyrin-containing compound metabolism; heme O biosynthesis; heme O from protoheme: step 1/1. In terms of biological role, converts heme B (protoheme IX) to heme O by substitution of the vinyl group on carbon 2 of heme B porphyrin ring with a hydroxyethyl farnesyl side group. This chain is Protoheme IX farnesyltransferase 2, found in Shewanella sp. (strain W3-18-1).